A 90-amino-acid chain; its full sequence is Cluster 41 protein AFLA_114800 (90 aa).

A helical membrane pass occupies residues 55–77; it reads GLLLLCCFYPIGNLILLVRLSLV. The N-linked (GlcNAc...) asparagine glycan is linked to Asn-80.

It is found in the membrane. Functionally, cluster 41 protein; part of the gene cluster 41 that mediates the biosynthesis of an extracellular and diffusible metabolite that is able to stimulate colony sclerotial production. In Aspergillus flavus (strain ATCC 200026 / FGSC A1120 / IAM 13836 / NRRL 3357 / JCM 12722 / SRRC 167), this protein is Cluster 41 protein AFLA_114800.